Consider the following 237-residue polypeptide: UPF0173 metal-dependent hydrolase BruAb2_0628 (237 aa).

The protein belongs to the UPF0173 family.

In Brucella abortus biovar 1 (strain 9-941), this protein is UPF0173 metal-dependent hydrolase BruAb2_0628.